Reading from the N-terminus, the 162-residue chain is uncharacterized protein (162 aa).

This is an uncharacterized protein from Schizosaccharomyces pombe (strain 972 / ATCC 24843) (Fission yeast).